A 124-amino-acid chain; its full sequence is Small ribosomal subunit protein uS12 (124 aa).

The segment at 1–28 (MPTIQQLIRSERSKAKKKTKSPALKQCP) is disordered. The residue at position 89 (D89) is a 3-methylthioaspartic acid. A disordered region spans residues 101–124 (TLDAQGVKDRKQGRSKYGTKKPKE). Residues 113-124 (GRSKYGTKKPKE) show a composition bias toward basic residues.

This sequence belongs to the universal ribosomal protein uS12 family. Part of the 30S ribosomal subunit. Contacts proteins S8 and S17. May interact with IF1 in the 30S initiation complex.

Its function is as follows. With S4 and S5 plays an important role in translational accuracy. Functionally, interacts with and stabilizes bases of the 16S rRNA that are involved in tRNA selection in the A site and with the mRNA backbone. Located at the interface of the 30S and 50S subunits, it traverses the body of the 30S subunit contacting proteins on the other side and probably holding the rRNA structure together. The combined cluster of proteins S8, S12 and S17 appears to hold together the shoulder and platform of the 30S subunit. In Crocosphaera subtropica (strain ATCC 51142 / BH68) (Cyanothece sp. (strain ATCC 51142)), this protein is Small ribosomal subunit protein uS12.